Reading from the N-terminus, the 89-residue chain is Large ribosomal subunit protein bL27 (89 aa).

Positions 1–21 are disordered; the sequence is MAHKKAGGSSRNGRDSKGKRL.

This sequence belongs to the bacterial ribosomal protein bL27 family.

The sequence is that of Large ribosomal subunit protein bL27 from Bradyrhizobium sp. (strain BTAi1 / ATCC BAA-1182).